The chain runs to 507 residues: Ribosomal protein uS12 methylthiotransferase RimO (507 aa).

In terms of domain architecture, MTTase N-terminal spans 13 to 124 (RRVALLTLGC…ISDRLGAVLA (112 aa)). [4Fe-4S] cluster is bound by residues Cys-22, Cys-58, and Cys-87. Positions 150–175 (AAVSLPGHGTRAAAAGPGGRSAPVEV) are disordered. Residues 155–172 (PGHGTRAAAAGPGGRSAP) are compositionally biased toward low complexity. Positions 191–422 (LDTGPVASLK…ALADELCAQR (232 aa)) constitute a Radical SAM core domain. The [4Fe-4S] cluster site is built by Cys-205, Cys-209, and Cys-212. The TRAM domain occupies 424-497 (EQRLGSTVQV…GVDLVAVPDG (74 aa)).

It belongs to the methylthiotransferase family. RimO subfamily. Requires [4Fe-4S] cluster as cofactor.

The protein localises to the cytoplasm. The enzyme catalyses L-aspartate(89)-[ribosomal protein uS12]-hydrogen + (sulfur carrier)-SH + AH2 + 2 S-adenosyl-L-methionine = 3-methylsulfanyl-L-aspartate(89)-[ribosomal protein uS12]-hydrogen + (sulfur carrier)-H + 5'-deoxyadenosine + L-methionine + A + S-adenosyl-L-homocysteine + 2 H(+). Functionally, catalyzes the methylthiolation of an aspartic acid residue of ribosomal protein uS12. In Salinispora arenicola (strain CNS-205), this protein is Ribosomal protein uS12 methylthiotransferase RimO.